Reading from the N-terminus, the 92-residue chain is Pyrimidine/purine nucleoside phosphorylase (92 aa).

This sequence belongs to the nucleoside phosphorylase PpnP family.

It carries out the reaction a purine D-ribonucleoside + phosphate = a purine nucleobase + alpha-D-ribose 1-phosphate. The catalysed reaction is adenosine + phosphate = alpha-D-ribose 1-phosphate + adenine. The enzyme catalyses cytidine + phosphate = cytosine + alpha-D-ribose 1-phosphate. It catalyses the reaction guanosine + phosphate = alpha-D-ribose 1-phosphate + guanine. It carries out the reaction inosine + phosphate = alpha-D-ribose 1-phosphate + hypoxanthine. The catalysed reaction is thymidine + phosphate = 2-deoxy-alpha-D-ribose 1-phosphate + thymine. The enzyme catalyses uridine + phosphate = alpha-D-ribose 1-phosphate + uracil. It catalyses the reaction xanthosine + phosphate = alpha-D-ribose 1-phosphate + xanthine. Its function is as follows. Catalyzes the phosphorolysis of diverse nucleosides, yielding D-ribose 1-phosphate and the respective free bases. Can use uridine, adenosine, guanosine, cytidine, thymidine, inosine and xanthosine as substrates. Also catalyzes the reverse reactions. This is Pyrimidine/purine nucleoside phosphorylase from Rhodopirellula baltica (strain DSM 10527 / NCIMB 13988 / SH1).